A 460-amino-acid polypeptide reads, in one-letter code: MLQIYNTLSKTKEVFTPLVGNQVRMYVCGMTVYDYCHLGHGRSMVAFDVITRWLRHRGYDLTYVRNITDIDDKIINRANENGEPFDVLTERMIAAMHEDEARLNILKPDQEPRATDHIAGMHAMIQTLIDKGYAYAPGNGDVYYRVGKFAGYGKLSRRRVEDLRIGARIEPGEAKEDPLDFVLWKGAKPGEPSWSSPWGEGRPGWHIECSVMSTCCLGDSFDIHGGGNDLEFPHHENEIAQSEAATGKPYAKSWLHCGMITINGEKMSKSLGNFFTIREVLEKYHPEVVRYLLIASHYRSPINYSEENLREAKAALDRFYNALKGLPEAAPAEAAEYVERFAAAMDDDFNTAGACSVLFELAREVNRLRESDLSAAAALAARLKQLAGLLGVLQLEPEAFLQAGAEGKVDAAEVEALIQARLEARAAKNWAESDRIRDQLTAMGVVLEDGKGGTTWRLAD.

Cys28 serves as a coordination point for Zn(2+). Positions Met30 to His40 match the 'HIGH' region motif. Cys209, His234, and Glu238 together coordinate Zn(2+). The short motif at Lys266 to Ser270 is the 'KMSKS' region element. Lys269 serves as a coordination point for ATP.

Belongs to the class-I aminoacyl-tRNA synthetase family. Monomer. Zn(2+) is required as a cofactor.

The protein localises to the cytoplasm. It carries out the reaction tRNA(Cys) + L-cysteine + ATP = L-cysteinyl-tRNA(Cys) + AMP + diphosphate. This is Cysteine--tRNA ligase from Pseudomonas aeruginosa (strain LESB58).